Reading from the N-terminus, the 263-residue chain is MASGKKLIDQLCSVVSSFLCPSISSLDIDRCAVGPHIFSRGSSQAICTVKLLHGEVYNLEFVYRYWAHILEKYNFPFSPTFIICNNGLAVTLKCYVSEPRDLSSRYGQATSMALDVNLQRNSFVVLSQDDFIKFKTPLVFAKDLDITNSMVVCRTYLTSSRNSLQFLVVKSKNPRRLENVLDMIKRAVEATGSNLPATREKPLPLEQTEQLESTLPSSGHLRVLQSTSLTGRCPSWGAACALLLLSLAVGLMAILAAKLMQWP.

Residues 1–235 (MASGKKLIDQ…STSLTGRCPS (235 aa)) are Perinuclear space-facing. A helical membrane pass occupies residues 236–256 (WGAACALLLLSLAVGLMAILA). Over 257-263 (AKLMQWP) the chain is Nuclear.

Belongs to the herpesviridae NEC2 protein family. As to quaternary structure, forms a heterohexameric complex with NEC1. Post-translationally, phosphorylated.

It localises to the host nucleus inner membrane. Functionally, plays an essential role in virion nuclear egress, the first step of virion release from infected cell. Within the host nucleus, NEC1 interacts with the newly formed capsid through the vertexes and directs it to the inner nuclear membrane by associating with NEC2. Induces the budding of the capsid at the inner nuclear membrane as well as its envelopment into the perinuclear space. There, the NEC1/NEC2 complex promotes the fusion of the enveloped capsid with the outer nuclear membrane and the subsequent release of the viral capsid into the cytoplasm where it will reach the secondary budding sites in the host Golgi or trans-Golgi network. The protein is Nuclear egress protein 2 of Connochaetes taurinus (Blue wildebeest).